Reading from the N-terminus, the 502-residue chain is Cytochrome P450 monooxygenase AacuE (502 aa).

Residues 4-26 (AITGLVATVTTFLAYIVFLSYTP) traverse the membrane as a helical segment. N393 carries an N-linked (GlcNAc...) asparagine glycan. C439 is a heme binding site.

It belongs to the cytochrome P450 family. Requires heme as cofactor.

The protein localises to the membrane. It participates in secondary metabolite biosynthesis. Functionally, cytochrome P450 monooxygenase; part of the gene cluster that mediates the biosynthesis of the tetrahydroxanthone dimer secalonic acid D. The pathway begins with the synthesis of atrochrysone thioester by the polyketide synthase AacuL. The atrochrysone carboxyl ACP thioesterase AacuM then breaks the thioester bond and releases the atrochrysone carboxylic acid from AacuL. Atrochrysone carboxylic acid is decarboxylated by the decarboxylase AacuI, and oxidized by the anthrone oxygenase AacuG to yield emodin. Emodin is then reduced to emodin hydroquinone by a yet unidentified oxidoreductase. A-ring reduction by the short chain dehydrogenase AacuN, dehydration by the scytalone dehydratase-like protein AacuK and probable spontaneous re-oxidation, results in overall deoxygenation to chrysophanol. Baeyer-Villiger oxidation by the Baeyer-Villiger monooxygenase (BVMO) AacuH then yields monodictyphenone. Monodictyphenone is transformed into compounds with the tetrahydroxanthone skeleton via methylesterification by the methyltransferase AacuQ, followed by the action of the flavin-dependent monooxygenase AacuC, the isomerase AacuP, and the short chain dehydrogenase/reductase AacuF or AacuD. AacuF and AacuD should accept the same compound as a substrate but perform the ketoreduction with a different stereoselectivity, thus yielding blennolides B and A, respectively. In the final step of the biosynthesis, the cytochrome P450 monooxygenase AacuE accepts blennolide B and/or blennolide A to conduct the dimerization reaction to furnish the tetrahydroxanthone dimers, secalonic acids D, B, and F. The protein is Cytochrome P450 monooxygenase AacuE of Aspergillus aculeatus (strain ATCC 16872 / CBS 172.66 / WB 5094).